The primary structure comprises 391 residues: MLPSHLNGHSPLARRCPRLSAASPPATGDSDAAAAAADAPLAEHDRIYFQSYSHIGIHEAMIKDRVRTDAYRSAIMHHQKFIEGKVVMDVGCGTGILSVFCARAGAKCVYAVEASEMATQAREIVKANNLDDKVVVVHGRVEDVEVEDKVDVIISEWMGYMLLYESMLPSVLFARDKWLKPGGLILPSHATLFMAPITNSERYEGSVDFWSDVYGINMSALVPLAKKFTSEEPSIEIIGGENVLSWPFVVKHIDCYTFKAEELKSFTTKYKVSSMMLAPIHGFGLWFEVEFNGPSNPTDKSPSDLNPLDVIRKKRRRGSEDPVVLSTAPEDEPTHWHQTILYFPDPIEVKQDQIIEGSVKVSQSEENPRFLNIQLDCTTGGQTLVKDYAMR.

A disordered region spans residues 1-35 (MLPSHLNGHSPLARRCPRLSAASPPATGDSDAAAA). Over residues 20-35 (SAASPPATGDSDAAAA) the composition is skewed to low complexity. The SAM-dependent MTase PRMT-type domain occupies 45–391 (DRIYFQSYSH…QTLVKDYAMR (347 aa)). Residues His58, Arg67, Gly91, Glu113, and Glu142 each contribute to the S-adenosyl-L-methionine site. Active-site residues include Glu156 and Glu165.

The protein belongs to the class I-like SAM-binding methyltransferase superfamily. Protein arginine N-methyltransferase family. PRMT6 subfamily.

Arginine methyltransferase that can both catalyze the formation of omega-N monomethylarginine (MMA) and asymmetrical dimethylarginine (aDMA). The protein is Probable protein arginine N-methyltransferase 6.1 (PRMT6.1) of Oryza sativa subsp. japonica (Rice).